The following is a 167-amino-acid chain: Urease accessory protein UreE (167 aa).

The protein belongs to the UreE family.

The protein localises to the cytoplasm. Functionally, involved in urease metallocenter assembly. Binds nickel. Probably functions as a nickel donor during metallocenter assembly. The sequence is that of Urease accessory protein UreE from Pseudomonas aeruginosa (strain UCBPP-PA14).